Consider the following 390-residue polypeptide: MAANYKSCPLKKRPIVFVEERLPQTEALALTKDSQFAQDQPQDLSLKRGRDEETQDYQQPEPKRDYVLNLSKTPERNSSSSSNSCLLSPPVEAQDYLPTEIHMRGLTAGTTGYTTATPTTINPFQSAFVMAAGCNPISALWSSYQPHLAAFPSPASSMASPQSVYSYQQMTPPSSPGSDLETGSEPEDLSVRNDIPLPALFHLFDEAKSSSSGASVSSSSGYSYTPAMSASSASVAANHAKNYRFKCDECQKMYSTSMGLSKHRQFHCPAAECNQEKKTHSCEECGKLYTTIGALKMHIRTHTLPCKCPICGKAFSRPWLLQGHIRTHTGEKPFQCPDCPRSFADRSNLRAHQQTHVDVKKYACQVCHKSFSRMSLLNKHSSSNCTITIA.

An SNAG domain region spans residues 1 to 20; sequence MAANYKSCPLKKRPIVFVEE. 2 disordered regions span residues 29 to 65 and 162 to 191; these read ALTKDSQFAQDQPQDLSLKRGRDEETQDYQQPEPKRD and QSVYSYQQMTPPSSPGSDLETGSEPEDLSV. 2 stretches are compositionally biased toward polar residues: residues 32 to 43 and 162 to 172; these read KDSQFAQDQPQD and QSVYSYQQMTP. 5 C2H2-type zinc fingers span residues 245 to 267, 280 to 302, 306 to 328, 334 to 356, and 362 to 385; these read FKCDECQKMYSTSMGLSKHRQFH, HSCEECGKLYTTIGALKMHIRTH, CKCPICGKAFSRPWLLQGHIRTH, FQCPDCPRSFADRSNLRAHQQTH, and YACQVCHKSFSRMSLLNKHSSSNC.

The protein belongs to the snail C2H2-type zinc-finger protein family.

It is found in the nucleus. Functionally, essential for the correct specification of ventral-dorsal patterns. In Drosophila melanogaster (Fruit fly), this protein is Protein snail (sna).